The primary structure comprises 496 residues: Glycerol kinase (496 aa).

Residue T12 participates in ADP binding. ATP is bound by residues T12, T13, and S14. Residue T12 coordinates sn-glycerol 3-phosphate. R16 contacts ADP. Residues R82, E83, and Y134 each contribute to the sn-glycerol 3-phosphate site. Glycerol contacts are provided by R82, E83, and Y134. A Phosphohistidine; by HPr modification is found at H230. Sn-glycerol 3-phosphate is bound at residue D244. Residues D244 and Q245 each contribute to the glycerol site. ADP-binding residues include T266 and G309. 4 residues coordinate ATP: T266, G309, Q313, and G410. Positions 410 and 414 each coordinate ADP.

Belongs to the FGGY kinase family. Homotetramer and homodimer (in equilibrium). Post-translationally, the phosphoenolpyruvate-dependent sugar phosphotransferase system (PTS), including enzyme I, and histidine-containing protein (HPr) are required for the phosphorylation, which leads to the activation of the enzyme.

The enzyme catalyses glycerol + ATP = sn-glycerol 3-phosphate + ADP + H(+). The protein operates within polyol metabolism; glycerol degradation via glycerol kinase pathway; sn-glycerol 3-phosphate from glycerol: step 1/1. With respect to regulation, activated by phosphorylation and inhibited by fructose 1,6-bisphosphate (FBP). In terms of biological role, key enzyme in the regulation of glycerol uptake and metabolism. Catalyzes the phosphorylation of glycerol to yield sn-glycerol 3-phosphate. The sequence is that of Glycerol kinase from Bacillus anthracis (strain A0248).